We begin with the raw amino-acid sequence, 631 residues long: Hepatocyte nuclear factor 1-alpha (631 aa).

Residues 1-31 (MVSKLSQLQTELLAALLESGLSKEALIQALG) form a dimerization region. An HNF-p1 domain is found at 1–32 (MVSKLSQLQTELLAALLESGLSKEALIQALGE). Residues 40-81 (GEGPLDKGESCGGGRGELAELPNGLGETRGSEDETDDDGEDF) form a disordered region. Residue Ser-70 is modified to Phosphoserine. The residue at position 74 (Thr-74) is a Phosphothreonine. Residues 87–182 (KELENLSPEE…VAQQFTHAGQ (96 aa)) form the POU-specific atypical domain. Ser-93 is subject to Phosphoserine. A Glycyl lysine isopeptide (Lys-Gly) (interchain with G-Cter in ubiquitin) cross-link involves residue Lys-117. 4 interaction with DNA regions span residues 130 to 132 (QRE), 143 to 149 (HLSQHLN), 155 to 158 (KTQK), and 203 to 206 (RFKW). A disordered region spans residues 183 to 205 (GGLIEEPTGDELPTKKGRRNRFK). A Nuclear localization signal motif is present at residues 197-205 (KKGRRNRFK). Residues 199 to 279 (GRRNRFKWGP…NRRKEEAFRH (81 aa)) constitute a DNA-binding region (homeobox; HNF1-type). Phosphoserine is present on Ser-247. 2 interaction with DNA regions span residues 263–265 (RVY) and 270–273 (NRRK). Disordered regions lie at residues 283-358 (MDTY…GLEP) and 545-567 (SDTEASSESGLHTPASQATTLHV). Over residues 288–298 (GPPPGPGPGPA) the composition is skewed to pro residues. Ser-313 carries the phosphoserine modification. Over residues 325–353 (PATSETAEVPSSSGGPLVTVSTPLHQVSP) the composition is skewed to polar residues.

Belongs to the HNF1 homeobox family. Binds DNA as a dimer. Heterotetramer with PCBD1; formed by a dimer of dimers. Interacts with PCBD1. Interacts with BHLHE41. Interacts with NR5A2. Interacts with SPOP; this interaction promotes ubiquitination and degradation of HNF1A. Ubiquitinated in s SPOP-dependent manner; leading to prteasomal degradation. Liver.

Its subcellular location is the nucleus. Functionally, transcriptional activator that regulates the tissue specific expression of multiple genes, especially in pancreatic islet cells and in liver. Binds to the inverted palindrome 5'-GTTAATNATTAAC-3'. Activates the transcription of CYP1A2, CYP2E1 and CYP3A11. Its function is as follows. (Microbial infection) Plays a crucial role for hepatitis B virus gene transcription and DNA replication. Mechanistically, synergistically cooperates with NR5A2 to up-regulate the activity of one of the critical cis-elements in the hepatitis B virus genome enhancer II (ENII). The chain is Hepatocyte nuclear factor 1-alpha (HNF1A) from Homo sapiens (Human).